Consider the following 218-residue polypeptide: Acetyl- and succinyl-CoA transferase MT0822 (218 aa).

The N-acetyltransferase domain maps to 32-188 (DTILEGVHDP…EALLFRLTRD (157 aa)). Residues glutamine 94, 109-113 (SGSWL), 119-124 (GHGYGT), 145-151 (SRSFVDN), and arginine 160 contribute to the substrate site.

As to quaternary structure, dimer of dimers.

It carries out the reaction L-lysyl-[protein] + acetyl-CoA = N(6)-acetyl-L-lysyl-[protein] + CoA + H(+). The enzyme catalyses succinyl-CoA + L-lysyl-[protein] = N(6)-succinyl-L-lysyl-[protein] + CoA + H(+). Acetylates and succinylates nucleoid-associated, DNA-binding protein HupB. This Mycobacterium tuberculosis (strain CDC 1551 / Oshkosh) protein is Acetyl- and succinyl-CoA transferase MT0822.